The following is a 208-amino-acid chain: UPF0301 protein MAB_4928c (208 aa).

This sequence belongs to the UPF0301 (AlgH) family.

This Mycobacteroides abscessus (strain ATCC 19977 / DSM 44196 / CCUG 20993 / CIP 104536 / JCM 13569 / NCTC 13031 / TMC 1543 / L948) (Mycobacterium abscessus) protein is UPF0301 protein MAB_4928c.